A 554-amino-acid polypeptide reads, in one-letter code: Sesquiterpene synthase 14a (554 aa).

Positions 305, 309, 449, and 457 each coordinate Mg(2+). The short motif at 305–309 (DDLYD) is the DDXXD motif element.

It belongs to the terpene synthase family. Tpsa subfamily. Mg(2+) serves as cofactor. Requires Mn(2+) as cofactor. Mostly expressed in stem trichomes.

The catalysed reaction is (2E,6E)-farnesyl diphosphate = beta-bisabolene + diphosphate. It carries out the reaction (2E,6E)-farnesyl diphosphate = (Z)-alpha-bisabolene + diphosphate. It catalyses the reaction (2E,6E)-farnesyl diphosphate = beta-acoradiene + diphosphate. The enzyme catalyses (2E,6E)-farnesyl diphosphate = (E)-gamma-bisabolene + diphosphate. The catalysed reaction is (2E,6E)-farnesyl diphosphate = (E)-beta-farnesene + diphosphate. It carries out the reaction (2E,6E)-farnesyl diphosphate = (Z)-beta-farnesene + diphosphate. It catalyses the reaction (2E)-geranyl diphosphate = limonene + diphosphate. The enzyme catalyses (2E)-geranyl diphosphate = beta-myrcene + diphosphate. It participates in secondary metabolite biosynthesis; terpenoid biosynthesis. Functionally, sesquiterpene synthase involved in the biosynthesis of volatile compounds. Mediates the conversion of (2E,6E)-farnesyl diphosphate ((EE)-FPP) into beta-bisabolene, beta-farnesene, (E)-gamma-bisabolene, beta-acoradiene, selinene and (Z)-alpha-bisabolene. Low or no activity with (2Z,6Z)-farnesyl diphosphate ((ZZ)-FPP). Can act with a low efficiency as a monoterpene synthase with geranyl diphosphate (GPP) as substrate, thus producing beta-myrcene and limonene. The chain is Sesquiterpene synthase 14a from Solanum habrochaites (Wild tomato).